Consider the following 329-residue polypeptide: Ketol-acid reductoisomerase (NADP(+)) (329 aa).

The KARI N-terminal Rossmann domain maps to 2–182; sequence VEIYYDDDAS…GGTRAGALRT (181 aa). Residues 25–28, S51, and S53 each bind NADP(+); that span reads YGSQ. Residue H108 is part of the active site. An NADP(+)-binding site is contributed by G134. Residues 183–328 form the KARI C-terminal knotted domain; it reads TFTEETETDL…AKLRPMMSWI (146 aa). Mg(2+) is bound by residues D191, E195, E227, and E231. S252 contacts substrate.

This sequence belongs to the ketol-acid reductoisomerase family. Mg(2+) is required as a cofactor.

It catalyses the reaction (2R)-2,3-dihydroxy-3-methylbutanoate + NADP(+) = (2S)-2-acetolactate + NADPH + H(+). The enzyme catalyses (2R,3R)-2,3-dihydroxy-3-methylpentanoate + NADP(+) = (S)-2-ethyl-2-hydroxy-3-oxobutanoate + NADPH + H(+). The protein operates within amino-acid biosynthesis; L-isoleucine biosynthesis; L-isoleucine from 2-oxobutanoate: step 2/4. Its pathway is amino-acid biosynthesis; L-valine biosynthesis; L-valine from pyruvate: step 2/4. Functionally, involved in the biosynthesis of branched-chain amino acids (BCAA). Catalyzes an alkyl-migration followed by a ketol-acid reduction of (S)-2-acetolactate (S2AL) to yield (R)-2,3-dihydroxy-isovalerate. In the isomerase reaction, S2AL is rearranged via a Mg-dependent methyl migration to produce 3-hydroxy-3-methyl-2-ketobutyrate (HMKB). In the reductase reaction, this 2-ketoacid undergoes a metal-dependent reduction by NADPH to yield (R)-2,3-dihydroxy-isovalerate. In Frankia casuarinae (strain DSM 45818 / CECT 9043 / HFP020203 / CcI3), this protein is Ketol-acid reductoisomerase (NADP(+)).